The chain runs to 402 residues: Triose phosphate/phosphate translocator, non-green plastid, chloroplastic (402 aa).

The transit peptide at 1–82 (MQSSAVFSAS…SLDTNRFKTA (82 aa)) directs the protein to the chloroplast. Residues 83 to 98 (ATAVPEEGEGSGKMTK) are Chloroplast intermembrane-facing. The chain crosses the membrane as a helical span at residues 99–119 (VLELGLLFAMWYLFNIYFNIY). Residues 118–236 (IYNKQVLKAL…IVGGVALASV (119 aa)) enclose the EamA domain. Over 120–131 (NKQVLKALHAPM) the chain is Lumenal. Residues 132–152 (TVTLVQFAVGSVLITFMWALN) form a helical membrane-spanning segment. Over 153–209 (LYKRPKISAAQLAAILPLAVVHTLGNLFTNMSLGKVSVSFTHTIKAMEPFFSVVLSA) the chain is Chloroplast intermembrane. The chain crosses the membrane as a helical span at residues 210–230 (MFLGEVPTPWVIGSIIPIVGG). Residues 231–278 (VALASVTEVSFNWAGFLSAMASNLTNQSRNVLSKKVMVKKDDSLDNIT) are Lumenal-facing. Residues 279-298 (LFSIITLMSLFLMAPVTFFS) traverse the membrane as a helical segment. Over 299–374 (EGIKFTPSYI…IFFKTPVSPV (76 aa)) the chain is Chloroplast intermembrane. A helical transmembrane segment spans residues 375–394 (NAFGTGIALAGVFLYSRVKR). At 395–402 (IKPKPKTA) the chain is on the lumenal side.

It belongs to the TPT transporter family. TPT (TC 2.A.7.9) subfamily. Homodimer.

Its subcellular location is the plastid. It is found in the chloroplast membrane. Its function is as follows. Mediates the export of fixed carbons from the chloroplasts into the cytosol in the form of triose phosphates. The polypeptide is Triose phosphate/phosphate translocator, non-green plastid, chloroplastic (NGTPT) (Brassica oleracea var. botrytis (Cauliflower)).